The chain runs to 209 residues: High frequency lysogenization protein HflD homolog (209 aa).

It belongs to the HflD family.

Its subcellular location is the cytoplasm. It localises to the cell inner membrane. The sequence is that of High frequency lysogenization protein HflD homolog from Halorhodospira halophila (strain DSM 244 / SL1) (Ectothiorhodospira halophila (strain DSM 244 / SL1)).